The primary structure comprises 495 residues: Glycogen synthase (495 aa).

An ADP-alpha-D-glucose-binding site is contributed by lysine 24.

This sequence belongs to the glycosyltransferase 1 family. Bacterial/plant glycogen synthase subfamily.

The catalysed reaction is [(1-&gt;4)-alpha-D-glucosyl](n) + ADP-alpha-D-glucose = [(1-&gt;4)-alpha-D-glucosyl](n+1) + ADP + H(+). It participates in glycan biosynthesis; glycogen biosynthesis. Functionally, synthesizes alpha-1,4-glucan chains using ADP-glucose. This chain is Glycogen synthase, found in Nitrosomonas europaea (strain ATCC 19718 / CIP 103999 / KCTC 2705 / NBRC 14298).